Consider the following 78-residue polypeptide: U7-lycotoxin-Ls1h (78 aa).

The N-terminal stretch at 1–22 is a signal peptide; the sequence is MKLIIFTGLTLLLIVSLIDVEA. Residues 23 to 26 constitute a propeptide that is removed on maturation; it reads QNEG.

Belongs to the neurotoxin 19 (CSTX) family. 07 (U7-Lctx) subfamily. Contains 4 disulfide bonds. In terms of tissue distribution, expressed by the venom gland.

The protein resides in the secreted. The sequence is that of U7-lycotoxin-Ls1h from Lycosa singoriensis (Wolf spider).